A 457-amino-acid polypeptide reads, in one-letter code: Aromatic amino acid transport protein AroP (457 aa).

At 1 to 18 the chain is on the cytoplasmic side; that stretch reads MMEGQQHGEQLKRGLKNR. The chain crosses the membrane as a helical span at residues 19-39; it reads HIQLIALGGAIGTGLFLGSAS. Residues 40-42 are Periplasmic-facing; that stretch reads VIQ. The helical transmembrane segment at 43-63 threads the bilayer; sequence SAGPGIILGYAIAGFIAFLIM. Topologically, residues 64–98 are cytoplasmic; the sequence is RQLGEMVVEEPVAGSFSHFAYKYWGSFAGFASGWN. A helical transmembrane segment spans residues 99-119; the sequence is YWVLYVLVAMAELTAVGKYIQ. Residues 120-124 are Periplasmic-facing; it reads FWYPE. A helical transmembrane segment spans residues 125–145; sequence IPTWVSAAVFFVVINAINLTN. Residues 146–147 are Cytoplasmic-facing; that stretch reads VK. The chain crosses the membrane as a helical span at residues 148-168; the sequence is VFGEMEFWFAIIKVIAVVAMI. Topologically, residues 169–192 are periplasmic; sequence IFGGWLLFSGNGGPQATVSNLWDQ. A helical membrane pass occupies residues 193–213; the sequence is GGFLPHGFTGLVMMMAIIMFS. The Cytoplasmic segment spans residues 214–239; the sequence is FGGLELVGITAAEADNPEQSIPKATN. A helical membrane pass occupies residues 240 to 260; that stretch reads QVIYRILIFYIGSLAVLLSLM. Residues 261 to 279 are Periplasmic-facing; sequence PWTRVTADTSPFVLIFHEL. A helical membrane pass occupies residues 280-300; the sequence is GDTFVANALNIVVLTAALSVY. Residues 301 to 330 are Cytoplasmic-facing; the sequence is NSCVYCNSRMLFGLAQQGNAPKALASVDKR. The helical transmembrane segment at 331–351 threads the bilayer; it reads GVPVNTILVSALVTALCVLIN. Over 352 to 359 the chain is Periplasmic; sequence YLAPESAF. Residues 360 to 380 traverse the membrane as a helical segment; sequence GLLMALVVSALVINWAMISLA. The Cytoplasmic segment spans residues 381-402; sequence HMKFRRAKQEQGVVTRFPALLY. The helical transmembrane segment at 403-423 threads the bilayer; sequence PLGNWICLLFMAAVLVIMLMT. Over 424-426 the chain is Periplasmic; sequence PGM. Residues 427–447 traverse the membrane as a helical segment; sequence AISVYLIPVWLIVLGIGYLFK. Topologically, residues 448 to 457 are cytoplasmic; that stretch reads EKTAKAVKAH.

Belongs to the amino acid-polyamine-organocation (APC) superfamily. Amino acid transporter (AAT) (TC 2.A.3.1) family.

It is found in the cell inner membrane. It catalyses the reaction L-phenylalanine(in) + H(+)(in) = L-phenylalanine(out) + H(+)(out). It carries out the reaction L-tryptophan(in) + H(+)(in) = L-tryptophan(out) + H(+)(out). The catalysed reaction is L-tyrosine(in) + H(+)(in) = L-tyrosine(out) + H(+)(out). With respect to regulation, strong, mutual inhibition of uptake by tyrosine, phenylalanine, and tryptophan. Transport is also inhibited by the aromatic analogs p-fluorophenylalanine, beta-2-thienylalanine and 5-methyltryptophan. In terms of biological role, permease that is involved in the active transport across the cytoplasmic membrane of all three aromatic amino acids, phenylalanine, tyrosine and tryptophan. This is Aromatic amino acid transport protein AroP from Escherichia coli (strain K12).